Here is a 67-residue protein sequence, read N- to C-terminus: Small ribosomal subunit protein eS31 (67 aa).

Residues C31, C34, C49, and C52 each contribute to the Zn(2+) site. Residues 31-52 (CPKCGAGVFMAEHLNRFACGKC) form a C4-type zinc finger.

Belongs to the eukaryotic ribosomal protein eS31 family. In terms of assembly, part of the 30S ribosomal subunit. It depends on Zn(2+) as a cofactor.

This chain is Small ribosomal subunit protein eS31, found in Methanococcus maripaludis (strain C7 / ATCC BAA-1331).